The primary structure comprises 314 residues: Homoserine O-acetyltransferase (314 aa).

Cys142 (acyl-thioester intermediate) is an active-site residue. Residues Lys163 and Ser192 each coordinate substrate. His235 (proton acceptor) is an active-site residue. Glu237 is an active-site residue. Arg249 lines the substrate pocket.

This sequence belongs to the MetA family.

Its subcellular location is the cytoplasm. It carries out the reaction L-homoserine + acetyl-CoA = O-acetyl-L-homoserine + CoA. The protein operates within amino-acid biosynthesis; L-methionine biosynthesis via de novo pathway; O-acetyl-L-homoserine from L-homoserine: step 1/1. Functionally, transfers an acetyl group from acetyl-CoA to L-homoserine, forming acetyl-L-homoserine. The chain is Homoserine O-acetyltransferase from Streptococcus pneumoniae (strain Taiwan19F-14).